The following is a 79-amino-acid chain: MLTKINKAIALVFVSLISFYQKWISPLFGPSCRFIPSCSAYGIEAVNKHGPWRGGWLTLKRLSKCHPLTPCGCDPVPEK.

This sequence belongs to the UPF0161 family.

The protein resides in the cell inner membrane. Its function is as follows. Could be involved in insertion of integral membrane proteins into the membrane. This chain is Putative membrane protein insertion efficiency factor, found in Prochlorococcus marinus (strain NATL2A).